The chain runs to 412 residues: Protein ALF (412 aa).

2 disordered regions span residues 1–47 (MDPE…PLPP) and 154–234 (GLSE…GISE). Residues 31 to 47 (PPQPPPPPLPPPQPLPP) show a composition bias toward pro residues. Positions 187–196 (MRQRRRKKVV) are enriched in basic residues. The segment covering 206–221 (MEEDEDTEEGQEDNED) has biased composition (acidic residues). 3 DNA-binding regions span residues 237–241 (REHPF), 306–313 (NKPKMRHY), and 377–380 (YVPT).

This sequence belongs to the FLO/LFY family. In terms of tissue distribution, expressed in the floral meristem and also in the vegetative meristem.

The protein resides in the nucleus. Probable transcription factor required for the specification of floral meristem identity. In Petunia hybrida (Petunia), this protein is Protein ALF (ALF).